The primary structure comprises 570 residues: Ferroportin (570 aa).

The Cytoplasmic portion of the chain corresponds to 1-23 (MTKSRDQTHQEGCCGSLANYLTS). A helical membrane pass occupies residues 24–53 (AKFLLYLGHSLSTWGDRMWHFAVSVFLVEL). 2 residues coordinate Fe cation: Asp39 and His43. Residues 54 to 57 (YGNS) lie on the Extracellular side of the membrane. Residues 58–84 (LLLTAVYGLVVAGSVLVLGAIIGDWVD) form a helical membrane-spanning segment. Residues 85–87 (KNA) lie on the Cytoplasmic side of the membrane. The chain crosses the membrane as a helical span at residues 88–118 (RLKVAQTSLVVQNVSVILCGIILMMVFLHKN). The Extracellular portion of the chain corresponds to 119 to 126 (ELLNMYHG). Residues 127-162 (WVLTVCYILIITIANIANLASTATAITIQRDWIVVV) traverse the membrane as a helical segment. Residues 163–164 (AG) lie on the Cytoplasmic side of the membrane. The helical transmembrane segment at 165-195 (ENRSRLADMNATIRRIDQLTNILAPMAVGQI) threads the bilayer. The Extracellular portion of the chain corresponds to 196–202 (MTFGSPV). A helical membrane pass occupies residues 203–229 (IGCGFISGWNLVSMCVEYFLLWKVYQK). Topologically, residues 230–306 (TPALAVKAAL…DGWVSYYNQP (77 aa)) are cytoplasmic. A helical transmembrane segment spans residues 307-333 (VFLAGMGLAFLYMTVLGFDCITTGYAY). Cys326 is a binding site for Fe cation. At 334 to 338 (TQGLS) the chain is on the extracellular side. Residues 339-366 (GSILSVLMGASAITGIMGTVAFTWLRRK) form a helical membrane-spanning segment. Residues 367–368 (CG) are Cytoplasmic-facing. The chain crosses the membrane as a helical span at residues 369–391 (LVRTGLFSGLAQLSCLILCVISV). At 392–452 (FMPGSPLDLS…EMSTKSVPII (61 aa)) the chain is on the extracellular side. The chain crosses the membrane as a helical span at residues 453-482 (SVSLLFAGVIAARIGLWSFDLTVTQLLQEN). At 483 to 487 (VIESE) the chain is on the cytoplasmic side. The chain crosses the membrane as a helical span at residues 488-512 (RGIINGVQNSMNYLLDLLHFIMVIL). His506 is a binding site for Fe cation. Residues 513 to 515 (APN) lie on the Extracellular side of the membrane. The chain crosses the membrane as a helical span at residues 516 to 541 (PEAFGLLVLISVSFVAMGHLMYFRFA). Topologically, residues 542–570 (QKTLGNQIFVCAPDEKEVTDESQPNTSVV) are cytoplasmic.

It belongs to the ferroportin (FP) (TC 2.A.100) family. SLC40A subfamily. Identified in a complex with STOM. Interacts with HAMP; affinity of the peptide hormone HAMP for SLC40A1 increases by 80-fold in the presence of iron and the interaction promotes SLC40A1 ubiquitination and degradation. Part of a complex composed of SLC40A1/ferroportin, TF/transferrin and HEPH/hephaestin that transfers iron from cells to transferrin. Post-translationally, polyubiquitinated by RNF217; leading to proteasomal degradation. Under conditions of high systemic iron levels, both the hormone peptide hepcidin/HAMP and holo(iron bound)-transferrin/TF induce the ubiquitination, internalization and proteasomal degradation of SLC40A1 to control iron release from cells.

It localises to the cell membrane. The protein localises to the basolateral cell membrane. It carries out the reaction Fe(2+)(in) = Fe(2+)(out). During elevated serum iron levels, liver-derived hepcidin/HAMP negatively regulates cell surface SLC40A1 by inducing its ubiquitination, internalization, and degradation. Indeed, hepcidin/HAMP affinity towards ferroportin/SLC40A1 increases by 80-fold in the presence of iron. Transports Fe(2+) from the inside of a cell to the outside of the cell, playing a key role for maintaining systemic iron homeostasis. Transports iron from intestinal, splenic, hepatic cells, macrophages and erythrocytes into the blood to provide iron to other tissues. Controls therefore dietary iron uptake, iron recycling by macrophages and erythrocytes, and release of iron stores in hepatocytes. When iron is in excess in serum, circulating HAMP/hepcidin levels increase resulting in a degradation of SLC40A1, thus limiting the iron efflux to plasma. This Rattus norvegicus (Rat) protein is Ferroportin.